The sequence spans 1404 residues: DNA-directed RNA polymerase subunit beta' (1404 aa).

C70, C72, C85, and C88 together coordinate Zn(2+). Mg(2+) is bound by residues D460, D462, and D464. Residues C814, C888, C895, and C898 each coordinate Zn(2+).

This sequence belongs to the RNA polymerase beta' chain family. The RNAP catalytic core consists of 2 alpha, 1 beta, 1 beta' and 1 omega subunit. When a sigma factor is associated with the core the holoenzyme is formed, which can initiate transcription. The cofactor is Mg(2+). Zn(2+) is required as a cofactor.

It carries out the reaction RNA(n) + a ribonucleoside 5'-triphosphate = RNA(n+1) + diphosphate. Its function is as follows. DNA-dependent RNA polymerase catalyzes the transcription of DNA into RNA using the four ribonucleoside triphosphates as substrates. This is DNA-directed RNA polymerase subunit beta' from Shewanella halifaxensis (strain HAW-EB4).